A 463-amino-acid chain; its full sequence is Glycine--tRNA ligase (463 aa).

Positions 100 and 175 each coordinate substrate. ATP is bound by residues 207–209 (RNE), 217–222 (FRTREF), 291–292 (EL), and 335–338 (GADR). 222 to 226 (FEQME) is a binding site for substrate. Residue 331-335 (EPSLG) coordinates substrate.

It belongs to the class-II aminoacyl-tRNA synthetase family. Homodimer.

It is found in the cytoplasm. It catalyses the reaction tRNA(Gly) + glycine + ATP = glycyl-tRNA(Gly) + AMP + diphosphate. Its function is as follows. Catalyzes the attachment of glycine to tRNA(Gly). In Clostridium tetani (strain Massachusetts / E88), this protein is Glycine--tRNA ligase.